A 248-amino-acid chain; its full sequence is Pyridoxal 4-dehydrogenase (248 aa).

Residue 11–35 coordinates NAD(+); sequence LVTGAAQGIGKAIAARLAADGATVI. S141 serves as a coordination point for substrate. Y154 serves as the catalytic Proton acceptor.

The protein belongs to the short-chain dehydrogenases/reductases (SDR) family. As to quaternary structure, homotetramer.

It carries out the reaction pyridoxal + NAD(+) = 4-pyridoxolactone + NADH + H(+). The protein operates within cofactor degradation; B6 vitamer degradation; 4-pyridoxate from pyridoxal: step 1/2. Its function is as follows. Involved in the degradation of pyridoxine or pyridoxamine (free, phosphate-unbound, forms of vitamin B6). Oxidizes pyridoxal to 4-pyridoxolactone, but does not have activity toward pyridoxal 5'-phosphate, pyridoxine, pyridoxamine, pyridoxamine 5'-phosphate, 4-phthalaldehyde, 2-nitrobenzaldehyde, pyridine, formaldehyde, 2-carboxybenzaldehyde or sugars. The sequence is that of Pyridoxal 4-dehydrogenase from Mesorhizobium japonicum (strain LMG 29417 / CECT 9101 / MAFF 303099) (Mesorhizobium loti (strain MAFF 303099)).